The following is a 546-amino-acid chain: CTP synthase (546 aa).

The segment at 1 to 266 is amidoligase domain; that stretch reads MTKYIFVTGG…GDYLVERLGL (266 aa). Ser13 provides a ligand contact to CTP. UTP is bound at residue Ser13. 14 to 19 contributes to the ATP binding site; it reads SVGKGI. Tyr54 provides a ligand contact to L-glutamine. Asp71 serves as a coordination point for ATP. 2 residues coordinate Mg(2+): Asp71 and Glu141. CTP contacts are provided by residues 148–150, 187–192, and Lys223; these read DIE and KTKPTQ. UTP contacts are provided by residues 187–192 and Lys223; that span reads KTKPTQ. The region spanning 291–533 is the Glutamine amidotransferase type-1 domain; that stretch reads PIALVGKYVE…VAAAAQTLLA (243 aa). Residue Gly353 participates in L-glutamine binding. The Nucleophile; for glutamine hydrolysis role is filled by Cys380. Residues 381 to 384, Glu404, and Arg461 contribute to the L-glutamine site; that span reads LGMQ. Active-site residues include His506 and Glu508.

Belongs to the CTP synthase family. Homotetramer.

The enzyme catalyses UTP + L-glutamine + ATP + H2O = CTP + L-glutamate + ADP + phosphate + 2 H(+). It carries out the reaction L-glutamine + H2O = L-glutamate + NH4(+). It catalyses the reaction UTP + NH4(+) + ATP = CTP + ADP + phosphate + 2 H(+). Its pathway is pyrimidine metabolism; CTP biosynthesis via de novo pathway; CTP from UDP: step 2/2. With respect to regulation, allosterically activated by GTP, when glutamine is the substrate; GTP has no effect on the reaction when ammonia is the substrate. The allosteric effector GTP functions by stabilizing the protein conformation that binds the tetrahedral intermediate(s) formed during glutamine hydrolysis. Inhibited by the product CTP, via allosteric rather than competitive inhibition. Its function is as follows. Catalyzes the ATP-dependent amination of UTP to CTP with either L-glutamine or ammonia as the source of nitrogen. Regulates intracellular CTP levels through interactions with the four ribonucleotide triphosphates. This is CTP synthase from Chloroflexus aurantiacus (strain ATCC 29366 / DSM 635 / J-10-fl).